The chain runs to 770 residues: MENVQSRMQGSRIPGLKEMNPSGTNARSRLPQPGAIANKPTAVPQLARTRSTTESTRIGAGPPSAARSVNGATKAHTRANSYANSSTLTRSASAASRPRGPLSSSTSGRPKTSMSTSRRPNGHALPRPATSLDTHQEERSYGGLGKRGEWDQDEREQNLESLFETFVSRISQQGQESSGLKDALEVYKSRVGELEEAKSEQTEQNIRLKVELDVSKSRLAEAEDALKNAQRDHEIAIDELMSRQRAECESVRYESQKSLDALKAQHESELKELRRQFERELEDEKCARVRELNQLHSKTALDAQLSQIELDKTIKELAATREDLQSLRTELDRERKNTNNLRQNLDTAASNSVTLESTISALKARIEFLESGREEQSEAFERLNQQMMDAMAETNAAKEKLRREETLRRKLHNQVQELKGNIRVFCRVRPTLENEGASDAAQFTYPDEGEDSKEINIIGPEEKSSFGTVTRKNHNFSFDHVFGPSAQNSDVFDEISQLVQSALDGYNVCIFCYGQTGSGKTHTMSSLDGMIPRAVHQIYETATSLEEKGWRYTMEGNFVEVYNENLNDLLGKAEELDKKKLEIRHDMQRGKTTITDATTVQLESPEMVESLLKRAAANRSVAATKANERSSRSHSIFILKLIGENYITGERSEGTLNLVDLAGSERLSHSGATGDRLKETQNINRSLSCLGDVIAALGQGKKDGHIPYRNSKLTYLLQFSLGGNSKTLMFVMVSPLQAHLSETLTSLKFATKVHNTHIGTAKKQTRVRDV.

The segment at 1–152 is disordered; that stretch reads MENVQSRMQG…GLGKRGEWDQ (152 aa). The segment covering 85-105 has biased composition (low complexity); sequence SSTLTRSASAASRPRGPLSSS. The segment covering 106–119 has biased composition (polar residues); the sequence is TSGRPKTSMSTSRR. The segment covering 134–152 has biased composition (basic and acidic residues); it reads THQEERSYGGLGKRGEWDQ. A coiled-coil region spans residues 175–425; sequence QESSGLKDAL…QELKGNIRVF (251 aa). Residues 421 to 756 enclose the Kinesin motor domain; the sequence is NIRVFCRVRP…LKFATKVHNT (336 aa). 514-521 provides a ligand contact to ATP; sequence GQTGSGKT.

The protein belongs to the TRAFAC class myosin-kinesin ATPase superfamily. Kinesin family. NCD subfamily.

The protein localises to the cytoplasm. It localises to the cytoskeleton. In Emericella nidulans (strain FGSC A4 / ATCC 38163 / CBS 112.46 / NRRL 194 / M139) (Aspergillus nidulans), this protein is Kinesin-like protein klpA (klpA).